The sequence spans 111 residues: Probable 4-amino-4-deoxy-L-arabinose-phosphoundecaprenol flippase subunit ArnE (111 aa).

The next 3 helical transmembrane spans lie at 38–58 (LWLG…LLVL), 61–81 (LPVG…TLAA), and 91–111 (PRHW…GSAA). The 70-residue stretch at 40–109 (LGLALICMGA…IISGIIILGS (70 aa)) folds into the EamA domain.

The protein belongs to the ArnE family. In terms of assembly, heterodimer of ArnE and ArnF.

It localises to the cell inner membrane. Its pathway is bacterial outer membrane biogenesis; lipopolysaccharide biosynthesis. In terms of biological role, translocates 4-amino-4-deoxy-L-arabinose-phosphoundecaprenol (alpha-L-Ara4N-phosphoundecaprenol) from the cytoplasmic to the periplasmic side of the inner membrane. The chain is Probable 4-amino-4-deoxy-L-arabinose-phosphoundecaprenol flippase subunit ArnE from Salmonella heidelberg (strain SL476).